Here is a 559-residue protein sequence, read N- to C-terminus: 5'-AMP-activated protein kinase catalytic subunit alpha-1 (559 aa).

In terms of domain architecture, Protein kinase spans 27 to 279 (YILGDTLGVG…IKDIREHEWF (253 aa)). T32 carries the post-translational modification Phosphothreonine. Residues 33–41 (LGVGTFGKV) and K56 each bind ATP. The active-site Proton acceptor is D150. Phosphothreonine; by LKB1 and CaMKK2 is present on T183. The AIS stretch occupies residues 302 to 381 (EALKEVCEKF…PERVPFLVAE (80 aa)). A Phosphothreonine modification is found at T355. S356 is modified (phosphoserine). S360 bears the Phosphoserine; by ULK1 mark. T368 is subject to Phosphothreonine; by ULK1. T382 carries the post-translational modification Phosphothreonine. Position 397 is a phosphoserine; by ULK1 (S397). Residues S467 and S486 each carry the phosphoserine modification. The segment covering 485 to 505 (KSGTATPQRSGSISNYRSCQR) has biased composition (polar residues). The segment at 485–536 (KSGTATPQRSGSISNYRSCQRSDSDAEAQGKPSDVSLTSSVTSLDSSPVDVA) is disordered. Residue T488 is modified to Phosphothreonine; by ULK1. T490 bears the Phosphothreonine mark. S496, S508, S524, and S527 each carry phosphoserine. Residues 516–535 (PSDVSLTSSVTSLDSSPVDV) are compositionally biased toward low complexity.

The protein belongs to the protein kinase superfamily. CAMK Ser/Thr protein kinase family. SNF1 subfamily. In terms of assembly, AMPK is a heterotrimer of an alpha catalytic subunit (PRKAA1 or PRKAA2), a beta (PRKAB1 or PRKAB2) and a gamma non-catalytic subunits (PRKAG1, PRKAG2 or PRKAG3). Interacts with FNIP1 and FNIP2. Requires Mg(2+) as cofactor. Post-translationally, phosphorylated at Thr-183 by STK11/LKB1 in complex with STE20-related adapter-alpha (STRADA) pseudo kinase and CAB39. Also phosphorylated at Thr-183 by CAMKK2; triggered by a rise in intracellular calcium ions, without detectable changes in the AMP/ATP ratio. CAMKK1 can also phosphorylate Thr-183, but at a much lower level. Dephosphorylated by protein phosphatase 2A and 2C (PP2A and PP2C). Phosphorylated by ULK1 and ULK2; leading to negatively regulate AMPK activity and suggesting the existence of a regulatory feedback loop between ULK1, ULK2 and AMPK. Dephosphorylated by PPM1A and PPM1B. Ubiquitinated. In terms of processing, glycosylated; O-GlcNAcylated by OGT, promoting the AMP-activated protein kinase (AMPK) activity.

It is found in the cytoplasm. It localises to the nucleus. It carries out the reaction L-seryl-[protein] + ATP = O-phospho-L-seryl-[protein] + ADP + H(+). It catalyses the reaction L-threonyl-[protein] + ATP = O-phospho-L-threonyl-[protein] + ADP + H(+). The catalysed reaction is L-seryl-[acetyl-CoA carboxylase] + ATP = O-phospho-L-seryl-[acetyl-CoA carboxylase] + ADP + H(+). The enzyme catalyses L-seryl-[3-hydroxy-3-methylglutaryl-coenzyme A reductase] + ATP = O-phospho-L-seryl-[3-hydroxy-3-methylglutaryl-coenzyme A reductase] + ADP + H(+). It carries out the reaction L-seryl-[tau protein] + ATP = O-phospho-L-seryl-[tau protein] + ADP + H(+). It catalyses the reaction L-threonyl-[tau protein] + ATP = O-phospho-L-threonyl-[tau protein] + ADP + H(+). Its activity is regulated as follows. Activated by phosphorylation on Thr-183. Binding of AMP to non-catalytic gamma subunit (PRKAG1, PRKAG2 or PRKAG3) results in allosteric activation, inducing phosphorylation on Thr-183. AMP-binding to gamma subunit also sustains activity by preventing dephosphorylation of Thr-183. ADP also stimulates Thr-183 phosphorylation, without stimulating already phosphorylated AMPK. ATP promotes dephosphorylation of Thr-183, rendering the enzyme inactive. Under physiological conditions AMPK mainly exists in its inactive form in complex with ATP, which is much more abundant than AMP. Selectively inhibited by compound C (6-[4-(2-Piperidin-1-yl-ethoxy)-phenyl)]-3-pyridin-4-yl-pyyrazolo[1,5-a] pyrimidine. Activated by resveratrol, a natural polyphenol present in red wine, and S17834, a synthetic polyphenol. Catalytic subunit of AMP-activated protein kinase (AMPK), an energy sensor protein kinase that plays a key role in regulating cellular energy metabolism. In response to reduction of intracellular ATP levels, AMPK activates energy-producing pathways and inhibits energy-consuming processes: inhibits protein, carbohydrate and lipid biosynthesis, as well as cell growth and proliferation. AMPK acts via direct phosphorylation of metabolic enzymes, and by longer-term effects via phosphorylation of transcription regulators. Regulates lipid synthesis by phosphorylating and inactivating lipid metabolic enzymes such as ACACA, ACACB, GYS1, HMGCR and LIPE; regulates fatty acid and cholesterol synthesis by phosphorylating acetyl-CoA carboxylase (ACACA and ACACB) and hormone-sensitive lipase (LIPE) enzymes, respectively. Promotes lipolysis of lipid droplets by mediating phosphorylation of isoform 1 of CHKA (CHKalpha2). Regulates insulin-signaling and glycolysis by phosphorylating IRS1, PFKFB2 and PFKFB3. AMPK stimulates glucose uptake in muscle by increasing the translocation of the glucose transporter SLC2A4/GLUT4 to the plasma membrane, possibly by mediating phosphorylation of TBC1D4/AS160. Regulates transcription and chromatin structure by phosphorylating transcription regulators involved in energy metabolism such as CRTC2/TORC2, FOXO3, histone H2B, HDAC5, MEF2C, MLXIPL/ChREBP, EP300, HNF4A, p53/TP53, SREBF1, SREBF2 and PPARGC1A. Acts as a key regulator of glucose homeostasis in liver by phosphorylating CRTC2/TORC2, leading to CRTC2/TORC2 sequestration in the cytoplasm. In response to stress, phosphorylates 'Ser-36' of histone H2B (H2BS36ph), leading to promote transcription. Acts as a key regulator of cell growth and proliferation by phosphorylating FNIP1, TSC2, RPTOR, WDR24 and ATG1/ULK1: in response to nutrient limitation, negatively regulates the mTORC1 complex by phosphorylating RPTOR component of the mTORC1 complex and by phosphorylating and activating TSC2. Also phosphorylates and inhibits GATOR2 subunit WDR24 in response to nutrient limitation, leading to suppress glucose-mediated mTORC1 activation. In response to energetic stress, phosphorylates FNIP1, inactivating the non-canonical mTORC1 signaling, thereby promoting nuclear translocation of TFEB and TFE3, and inducing transcription of lysosomal or autophagy genes. In response to nutrient limitation, promotes autophagy by phosphorylating and activating ATG1/ULK1. In that process, it also activates WDR45/WIPI4. Phosphorylates CASP6, thereby preventing its autoprocessing and subsequent activation. In response to nutrient limitation, phosphorylates transcription factor FOXO3 promoting FOXO3 mitochondrial import. Also acts as a regulator of cellular polarity by remodeling the actin cytoskeleton; probably by indirectly activating myosin. AMPK also acts as a regulator of circadian rhythm by mediating phosphorylation of CRY1, leading to destabilize it. May regulate the Wnt signaling pathway by phosphorylating CTNNB1, leading to stabilize it. Also has tau-protein kinase activity: in response to amyloid beta A4 protein (APP) exposure, activated by CAMKK2, leading to phosphorylation of MAPT/TAU; however the relevance of such data remains unclear in vivo. Also phosphorylates CFTR, EEF2K, KLC1, NOS3 and SLC12A1. Regulates hepatic lipogenesis. Activated via SIRT3, represses sterol regulatory element-binding protein (SREBP) transcriptional activities and ATP-consuming lipogenesis to restore cellular energy balance. Upon stress, regulates mitochondrial fragmentation through phosphorylation of MTFR1L. The polypeptide is 5'-AMP-activated protein kinase catalytic subunit alpha-1 (Prkaa1) (Mus musculus (Mouse)).